We begin with the raw amino-acid sequence, 503 residues long: Maturase K (503 aa).

This sequence belongs to the intron maturase 2 family. MatK subfamily.

It localises to the plastid. The protein resides in the chloroplast. Its function is as follows. Usually encoded in the trnK tRNA gene intron. Probably assists in splicing its own and other chloroplast group II introns. The chain is Maturase K from Rosa rugosa (Rugosa rose).